A 706-amino-acid polypeptide reads, in one-letter code: MALAKAASINDDIHDLTMRAFRCYVLDLVEQYEGGHPGSAMGMVAMGIALWKYTMKYSTNDPTWFNRDRFVLSNGHVCLFQYLFQHLSGLKSMTEKQLKSYHSSDYHSKCPGHPEIENEAVEVTTGPLGQGISNSVGLAIASKNLGALYNKPGYEVVNNTTYCIVGDACLQEGPALESISFAGHLGLDNLVVIYDNNQVCCDGSVDIANTEDISAKFRACNWNVIEVEDGARDVATIVKALELAGAEKNRPTLINVRTIIGTDSAFQNHCAAHGSALGEEGIRELKIKYGFNPSQKFHFPQEVYDFFSDIPAKGDEYVSNWNKLVSSYVKEFPELGAEFQSRVKGELPKNWKSLLPNNLPNEDTATRTSARAMVRALAKDVPNVIAGSADLSVSVNLPWPGSKYFENPQLATQCGLAGDYSGRYVEFGIREHCMCAIANGLAAFNKGTFLPITSSFYMFYLYAAPALRMAALQELKAIHIATHDSIGAGEDGPTHQPIAQSALWRAMPNFYYMRPGDASEVRGLFEKAVELPLSTLFSLSRHEVPQYPGKSSIELAKRGGYVFEDAKDADIQLIGAGSELEQAVKTARILRSRGLKVRILSFPCQRLFDEQSVGYRRSVLQRGKVPTVVIEAYVAYGWERYATAGYTMNTFGKSLPVEDVYEYFGFNPSEISKKIEGYVRAVKANPDLLYEFIDLTEKPKHDQNHL.

Thiamine diphosphate is bound by residues histidine 76 and 126 to 128 (GPL). Mg(2+) contacts are provided by aspartate 167, asparagine 197, and valine 199. Asparagine 197 serves as a coordination point for thiamine diphosphate. 3 residues coordinate thiamine diphosphate: histidine 273, glutamate 431, and phenylalanine 459. The active-site Proton donor is glutamate 431. The Microbody targeting signal signature appears at 704 to 706 (NHL).

This sequence belongs to the transketolase family. The cofactor is Mg(2+). Ca(2+) is required as a cofactor. Mn(2+) serves as cofactor. Requires Co(2+) as cofactor. It depends on thiamine diphosphate as a cofactor.

It localises to the peroxisome. The enzyme catalyses D-xylulose 5-phosphate + formaldehyde = dihydroxyacetone + D-glyceraldehyde 3-phosphate. Functionally, involved in assimilation of formaldehyde. The protein is Dihydroxyacetone synthase (DAS1) of Candida boidinii (Yeast).